Consider the following 164-residue polypeptide: Methanogen homoaconitase small subunit 2 (164 aa).

The YLRT signature appears at 26 to 29 (YLRT).

It belongs to the LeuD family. LeuD type 2 subfamily. Heterotetramer of 2 HacA and 2 HacB proteins. Cannot form a complex with LeuC.

The catalysed reaction is (2R)-homocitrate = (2R,3S)-homoisocitrate. It carries out the reaction (2R)-homocitrate = cis-homoaconitate + H2O. It catalyses the reaction (2R,3S)-homoisocitrate = cis-homoaconitate + H2O. The enzyme catalyses cis-(homo)2aconitate + H2O = (2R,3S)-iso(homo)2citrate. The catalysed reaction is cis-(homo)3aconitate + H2O = (2R,3S)-iso(homo)3citrate. It participates in organic acid metabolism; 2-oxosuberate biosynthesis. Its function is as follows. Component of a hydro-lyase with broad substrate specificity for cis-unsaturated tricarboxylic acids. Catalyzes both the reversible dehydration of (R)-homocitrate ((R)-2-hydroxybutane-1,2,4-tricarboxylate) to produce cis-homoaconitate ((Z)-but-1-ene-1,2,4-tricarboxylate), and its hydration to homoisocitrate ((1R,2S)-1-hydroxybutane-1,2,4-tricarboxylate). Is also able to hydrate the analogous longer chain substrates cis-homo(2)-aconitate, cis-homo(3)-aconitate. These reactions are part of the biosynthesis pathway of coenzyme B. The polypeptide is Methanogen homoaconitase small subunit 2 (hacB2) (Methanosarcina acetivorans (strain ATCC 35395 / DSM 2834 / JCM 12185 / C2A)).